The chain runs to 727 residues: MHPSTFQTELNPHTSTLLKKLTHHSQQRNLVAGRAVHGQIIRTGASTCIQHANVLVNFYAKCGKLAKAHSIFNAIICKDVVSWNSLITGYSQNGGISSSYTVMQLFREMRAQDILPNAYTLAGIFKAESSLQSSTVGRQAHALVVKMSSFGDIYVDTSLVGMYCKAGLVEDGLKVFAYMPERNTYTWSTMVSGYATRGRVEEAIKVFNLFLREKEEGSDSDYVFTAVLSSLAATIYVGLGRQIHCITIKNGLLGFVALSNALVTMYSKCESLNEACKMFDSSGDRNSITWSAMVTGYSQNGESLEAVKLFSRMFSAGIKPSEYTIVGVLNACSDICYLEEGKQLHSFLLKLGFERHLFATTALVDMYAKAGCLADARKGFDCLQERDVALWTSLISGYVQNSDNEEALILYRRMKTAGIIPNDPTMASVLKACSSLATLELGKQVHGHTIKHGFGLEVPIGSALSTMYSKCGSLEDGNLVFRRTPNKDVVSWNAMISGLSHNGQGDEALELFEEMLAEGMEPDDVTFVNIISACSHKGFVERGWFYFNMMSDQIGLDPKVDHYACMVDLLSRAGQLKEAKEFIESANIDHGLCLWRILLSACKNHGKCELGVYAGEKLMALGSRESSTYVQLSGIYTALGRMRDVERVWKHMRANGVSKEVGCSWIELKNQYHVFVVGDTMHPMIEETKDLVCLVSRQMIEEGFVTVLDSSFVEEEEGTQLSTSFII.

PPR repeat units lie at residues 13-47 (HTST…GAST), 48-78 (CIQH…IICK), 79-116 (DVVS…DILP), 117-150 (NAYT…MSSF), 152-182 (DIYV…MPER), 183-213 (NTYT…FLRE), 220-254 (SDYV…GLLG), 255-285 (FVAL…SGDR), 286-320 (NSIT…GIKP), 321-355 (SEYT…GFER), 356-386 (HLFA…LQER), 387-421 (DVAL…GIIP), 422-456 (NDPT…GFGL), 457-487 (EVPI…TPNK), 488-522 (DVVS…GMEP), 523-553 (DDVT…MSDQ), and 559-593 (KVDH…HGLC). Positions 594–669 (LWRILLSACK…EVGCSWIELK (76 aa)) are type E motif. The type E(+) motif stretch occupies residues 670-700 (NQYHVFVVGDTMHPMIEETKDLVCLVSRQMI).

It belongs to the PPR family. PCMP-E subfamily.

This is Pentatricopeptide repeat-containing protein At2g33680 (PCMP-E19) from Arabidopsis thaliana (Mouse-ear cress).